A 343-amino-acid chain; its full sequence is Glucokinase (343 aa).

18–23 (GDIGGT) lines the ATP pocket.

The protein belongs to the bacterial glucokinase family.

It localises to the cytoplasm. The catalysed reaction is D-glucose + ATP = D-glucose 6-phosphate + ADP + H(+). This Brucella melitensis biotype 1 (strain ATCC 23456 / CCUG 17765 / NCTC 10094 / 16M) protein is Glucokinase.